Consider the following 316-residue polypeptide: Probable cell division protein WhiA (316 aa).

The segment at residues 275 to 309 (TLKELGEMVSGGKISKSGINHRLRKIDEIAEKLRA) is a DNA-binding region (H-T-H motif).

It belongs to the WhiA family.

Functionally, involved in cell division and chromosome segregation. In Bacillus cytotoxicus (strain DSM 22905 / CIP 110041 / 391-98 / NVH 391-98), this protein is Probable cell division protein WhiA.